The sequence spans 228 residues: Peptide deformylase (228 aa).

2 disordered regions span residues 1-28 (MSQDRRYTGCNTHSNTHSAQDREKEGAV) and 116-138 (GVPKRQTNKQQANNSTSCDEPDR). Composition is skewed to polar residues over residues 8–18 (TGCNTHSNTHS) and 123–133 (NKQQANNSTSC). Fe cation contacts are provided by Cys-141 and His-183. The active site involves Glu-184. Residue His-187 coordinates Fe cation.

It belongs to the polypeptide deformylase family. The cofactor is Fe(2+).

The enzyme catalyses N-terminal N-formyl-L-methionyl-[peptide] + H2O = N-terminal L-methionyl-[peptide] + formate. Removes the formyl group from the N-terminal Met of newly synthesized proteins. Requires at least a dipeptide for an efficient rate of reaction. N-terminal L-methionine is a prerequisite for activity but the enzyme has broad specificity at other positions. This Tropheryma whipplei (strain Twist) (Whipple's bacillus) protein is Peptide deformylase.